Reading from the N-terminus, the 198-residue chain is Recombination protein RecR (198 aa).

A C4-type zinc finger spans residues 57-72 (CTVCGHITDTDPCYIC). In terms of domain architecture, Toprim spans 80–175 (TTICVVQDPK…KVTRIAHGLP (96 aa)).

Belongs to the RecR family.

In terms of biological role, may play a role in DNA repair. It seems to be involved in an RecBC-independent recombinational process of DNA repair. It may act with RecF and RecO. The sequence is that of Recombination protein RecR from Geobacillus sp. (strain WCH70).